Here is a 407-residue protein sequence, read N- to C-terminus: MAKITGIECIRTRKNGTWTIVKVMTDQDGLYGLGSASDVYNPEAVVQIIEQLLAPLLIGKDAANIEDLWQTMYMSGYWRNGALLHTAIGGIDMALWDIKGKEAGLPVYQLLGGACRAAVPCYGHAGGKDIAELKEDVHRFIEEGYTVIRVQMGGYGGGGFIDRDKANIPQQAWGSGPVFDEQSYLHAIPHMFEQLRNEFGMGVQFTHDVHEHLTPVNAIQLAKRVEPYSLFFLEDAIAPEQIGWYRHLRQQSATPQAVGELFVNPQEWTQLIKEQLIDFIRVRVSKAGGISACRKIAALAEAFGVRTAWQEGGENDPVNQAAAVHLDMAIWNFGIQEVNHFKPEEKDAFEGHIERKGGYLYPSQKPGLGIELDELKAQQLLGEGWSKSVYFNPYQLDRKADGTLVRP.

Asp208 provides a ligand contact to Mg(2+). His210 serves as a coordination point for D-arabinonate. Residues Glu234 and Glu260 each coordinate Mg(2+). Residues Glu260, Arg281, and Glu337 each contribute to the D-arabinonate site.

This sequence belongs to the mandelate racemase/muconate lactonizing enzyme family. GalD subfamily.

Its function is as follows. Has no detectable activity with D-mannonate and with a panel of 70 other acid sugars (in vitro), in spite of the conservation of the residues that are expected to be important for catalytic activity and cofactor binding. May have evolved a divergent function. This chain is D-galactonate dehydratase family member Pjdr2_1176, found in Paenibacillus sp. (strain JDR-2).